Here is a 1463-residue protein sequence, read N- to C-terminus: Secretory phospholipase A2 receptor (1463 aa).

The signal sequence occupies residues 1–20 (MLLSPSLLLLLLLGAPRGCA). Residues 21-1397 (EGVAAALTPE…ALPEKGPSHS (1377 aa)) lie on the Extracellular side of the membrane. The Ricin B-type lectin domain occupies 38–161 (KGIFVIQSES…GSGGGDICEY (124 aa)). Intrachain disulfides connect Cys-51/Cys-64, Cys-89/Cys-106, Cys-178/Cys-204, Cys-192/Cys-219, Cys-260/Cys-354, Cys-330/Cys-346, Cys-406/Cys-501, Cys-478/Cys-493, Cys-617/Cys-634, Cys-699/Cys-796, Cys-774/Cys-788, Cys-840/Cys-937, Cys-914/Cys-929, and Cys-1067/Cys-1087. Asn-93 is a glycosylation site (N-linked (GlcNAc...) asparagine). A Fibronectin type-II domain is found at 173–221 (THGMPCMFPFQYNHQWHHECTREGREDDLLWCATTSRYERDEKWGFCPD). C-type lectin domains follow at residues 238-355 (NSHI…YICK), 385-502 (YNRN…YICK), 522-643 (HGGF…MSLC), 673-797 (GLAS…WICK), 819-938 (YQDA…SICK), 965-1096 (FNYK…GFVC), 1121-1232 (YGNR…GAIC), and 1257-1378 (FKSN…FICK). The N-linked (GlcNAc...) asparagine glycan is linked to Asn-454. The N-linked (GlcNAc...) asparagine glycan is linked to Asn-1123. 3 disulfides stabilise this stretch: Cys-1209–Cys-1223, Cys-1280–Cys-1377, and Cys-1354–Cys-1369. The chain crosses the membrane as a helical span at residues 1398 to 1418 (IIPLAVVLTLIVIVAICTLSF). Residues 1419 to 1463 (CIYKHNGGFFRRLAGFRNPYYPATNFSTVYLEENILISDLEKSDQ) are Cytoplasmic-facing. The Endocytosis signal motif lies at 1436 to 1442 (NPYYPAT).

In terms of assembly, interacts with sPLA2-IB/PLA2G1B; this interaction mediates intracellular signaling as well as clearance of extracellular sPLA2-IB/PLA2G1B via endocytotic pathway. Interacts with sPLA2-X/PLA2G10; this interaction mediates sPLA2-X/PLA2G10 clearance and inactivation. Post-translationally, the secretory phospholipase A2 receptor form may be produced by the action of metalloproteinases. It contains all extracellular domains and only lacks transmembrane and cytosolic regions. It is however unclear whether this form is produced by proteolytic cleavage as suggested by some experiments, or by alternative splicing, as in the case of isoform 2 that shares all characteristics of secretory phospholipase A2 receptor form. As to expression, expressed in podocytes (at protein level). Present in lung macrophage (at protein level). Highly expressed in kidney. Also expressed in pancreas, amnion, choriodecidua and placenta. Isoform 2 is expressed at much lower level.

It localises to the cell membrane. It is found in the secreted. In terms of biological role, receptor for secretory phospholipase A2 (sPLA2). Acts as a receptor for phospholipase sPLA2-IB/PLA2G1B but not sPLA2-IIA/PLA2G2A. Also able to bind to snake PA2-like toxins. Although its precise function remains unclear, binding of sPLA2 to its receptor participates in both positive and negative regulation of sPLA2 functions as well as clearance of sPLA2. Binding of sPLA2-IB/PLA2G1B induces various effects depending on the cell type, such as activation of the mitogen-activated protein kinase (MAPK) cascade to induce cell proliferation, the production of lipid mediators, selective release of arachidonic acid in bone marrow-derived mast cells. In neutrophils, binding of sPLA2-IB/PLA2G1B can activate p38 MAPK to stimulate elastase release and cell adhesion. May be involved in responses in pro-inflammatory cytokine productions during endotoxic shock. Also has endocytic properties and rapidly internalizes sPLA2 ligands, which is particularly important for the clearance of extracellular sPLA2s to protect their potent enzymatic activities. The soluble secretory phospholipase A2 receptor form is circulating and acts as a negative regulator of sPLA2 functions by blocking the biological functions of sPLA2-IB/PLA2G1B. In podocytes, binding of sPLA2-IB/PLA2G1B can regulate podocyte survival and glomerular homeostasis. This chain is Secretory phospholipase A2 receptor (PLA2R1), found in Homo sapiens (Human).